The sequence spans 747 residues: Sex-specific storage-protein 1 (747 aa).

A signal peptide spans 1–15; it reads MRVLVLLACLAAASA. N-linked (GlcNAc...) asparagine glycans are attached at residues N494 and N706.

Belongs to the hemocyanin family. As to expression, fat body.

The protein resides in the secreted. It is found in the extracellular space. In terms of biological role, larval storage protein (LSP) which may serve as a store of amino acids for synthesis of adult proteins. The polypeptide is Sex-specific storage-protein 1 (SP1) (Bombyx mori (Silk moth)).